A 514-amino-acid polypeptide reads, in one-letter code: Anthranilate synthase component 1 (514 aa).

Residues T40 and 290-292 (PYM) each bind L-tryptophan. 327 to 328 (GT) is a chorismate binding site. E360 is a Mg(2+) binding site. Residues Y448, R468, 482-484 (GAG), and G484 each bind chorismate. Position 497 (E497) interacts with Mg(2+).

This sequence belongs to the anthranilate synthase component I family. Heterotetramer consisting of two non-identical subunits: a beta subunit (TrpG) and a large alpha subunit (TrpE). Requires Mg(2+) as cofactor.

The catalysed reaction is chorismate + L-glutamine = anthranilate + pyruvate + L-glutamate + H(+). It functions in the pathway amino-acid biosynthesis; L-tryptophan biosynthesis; L-tryptophan from chorismate: step 1/5. Its activity is regulated as follows. Feedback inhibited by tryptophan. Functionally, part of a heterotetrameric complex that catalyzes the two-step biosynthesis of anthranilate, an intermediate in the biosynthesis of L-tryptophan. In the first step, the glutamine-binding beta subunit (TrpG) of anthranilate synthase (AS) provides the glutamine amidotransferase activity which generates ammonia as a substrate that, along with chorismate, is used in the second step, catalyzed by the large alpha subunit of AS (TrpE) to produce anthranilate. In the absence of TrpG, TrpE can synthesize anthranilate directly from chorismate and high concentrations of ammonia. The polypeptide is Anthranilate synthase component 1 (trpE) (Buchnera aphidicola subsp. Rhopalosiphum padi).